Consider the following 240-residue polypeptide: UDP-2,3-diacylglucosamine hydrolase (240 aa).

Mn(2+) contacts are provided by Asp-7, His-9, Asp-40, Asn-78, and His-113. Residue 78-79 (NR) coordinates substrate. The substrate site is built by Asp-121, Ser-159, Thr-163, Lys-166, and His-194. The Mn(2+) site is built by His-194 and His-196.

The protein belongs to the LpxH family. Mn(2+) serves as cofactor.

The protein localises to the cell inner membrane. The catalysed reaction is UDP-2-N,3-O-bis[(3R)-3-hydroxytetradecanoyl]-alpha-D-glucosamine + H2O = 2-N,3-O-bis[(3R)-3-hydroxytetradecanoyl]-alpha-D-glucosaminyl 1-phosphate + UMP + 2 H(+). Its pathway is glycolipid biosynthesis; lipid IV(A) biosynthesis; lipid IV(A) from (3R)-3-hydroxytetradecanoyl-[acyl-carrier-protein] and UDP-N-acetyl-alpha-D-glucosamine: step 4/6. Its function is as follows. Hydrolyzes the pyrophosphate bond of UDP-2,3-diacylglucosamine to yield 2,3-diacylglucosamine 1-phosphate (lipid X) and UMP by catalyzing the attack of water at the alpha-P atom. Involved in the biosynthesis of lipid A, a phosphorylated glycolipid that anchors the lipopolysaccharide to the outer membrane of the cell. This Pseudomonas entomophila (strain L48) protein is UDP-2,3-diacylglucosamine hydrolase.